Reading from the N-terminus, the 128-residue chain is Cytochrome c-type biogenesis protein CcmE (128 aa).

Residues 1-8 are Cytoplasmic-facing; sequence MQKRVRNR. Residues 9 to 29 form a helical; Signal-anchor for type II membrane protein membrane-spanning segment; that stretch reads LITIIICFCSACLGISIILYN. At 30–128 the chain is on the periplasmic side; the sequence is LEKNIVFFLP…KHDENYRPPQ (99 aa). Heme-binding residues include His-120 and Tyr-124.

It belongs to the CcmE/CycJ family.

Its subcellular location is the cell inner membrane. In terms of biological role, heme chaperone required for the biogenesis of c-type cytochromes. Transiently binds heme delivered by CcmC and transfers the heme to apo-cytochromes in a process facilitated by CcmF and CcmH. The sequence is that of Cytochrome c-type biogenesis protein CcmE from Rickettsia conorii (strain ATCC VR-613 / Malish 7).